A 305-amino-acid polypeptide reads, in one-letter code: Aquaporin-1 (305 aa).

Residues Met1–Lys34 form a disordered region. Residues Met1–His48 lie on the Cytoplasmic side of the membrane. A helical membrane pass occupies residues Phe49 to Ile69. At Cys70–Leu91 the chain is on the extracellular side. Residues Ile92–Val112 form a helical membrane-spanning segment. Residues Ser113–Cys136 lie on the Cytoplasmic side of the membrane. The short motif at Asn118–Ala120 is the NPA 1 element. Residues Val137–Met157 traverse the membrane as a helical segment. Residues Thr158–Arg176 lie on the Extracellular side of the membrane. A helical membrane pass occupies residues Gly177 to Val197. Over Glu198–Asn203 the chain is Cytoplasmic. The chain crosses the membrane as a helical span at residues Phe204 to Tyr224. The Extracellular segment spans residues Thr225–His248. An NPA 2 motif is present at residues Asn230–Ala232. The helical transmembrane segment at Trp249–Leu269 threads the bilayer. Topologically, residues Gln270–Val305 are cytoplasmic. The segment covering Thr286–Glu295 has biased composition (basic and acidic residues). Positions Thr286 to Val305 are disordered. Over residues Thr296 to Val305 the composition is skewed to polar residues.

This sequence belongs to the MIP/aquaporin (TC 1.A.8) family.

Its subcellular location is the endoplasmic reticulum membrane. It is found in the cell membrane. Its function is as follows. Water channel required to facilitate the transport of water across membranes. Involved in sporulation, freeze tolerance and osmotolerance. Is non-functional in most laboratory strains. In Saccharomyces cerevisiae (strain YJM789) (Baker's yeast), this protein is Aquaporin-1 (AQY1).